We begin with the raw amino-acid sequence, 290 residues long: Eukaryotic translation initiation factor 3 subunit F-2 (290 aa).

The 139-residue stretch at 12-150 (VRLQPLVLFQ…TRLYCAVTMG (139 aa)) folds into the MPN domain.

The protein belongs to the eIF-3 subunit F family. As to quaternary structure, component of the eukaryotic translation initiation factor 3 (eIF-3) complex. The eIF-3 complex interacts with pix.

It localises to the cytoplasm. Component of the eukaryotic translation initiation factor 3 (eIF-3) complex, which is involved in protein synthesis of a specialized repertoire of mRNAs and, together with other initiation factors, stimulates binding of mRNA and methionyl-tRNAi to the 40S ribosome. The eIF-3 complex specifically targets and initiates translation of a subset of mRNAs involved in cell proliferation. The protein is Eukaryotic translation initiation factor 3 subunit F-2 of Drosophila mojavensis (Fruit fly).